A 441-amino-acid polypeptide reads, in one-letter code: Cytochrome P450 monooxygenase cpsC (441 aa).

A disordered region spans residues 175–195; that stretch reads STTSQARKDETTATQQAGMEQ. Over residues 186–195 the composition is skewed to polar residues; sequence TATQQAGMEQ. Cysteine 377 is a binding site for heme.

Belongs to the cytochrome P450 family. The cofactor is heme.

It catalyses the reaction campesine D + reduced [NADPH--hemoprotein reductase] + O2 = campesine G + oxidized [NADPH--hemoprotein reductase] + 2 H2O + H(+). It participates in alkaloid biosynthesis. Its function is as follows. Cytochrome P450 monooxygenase; part of the gene cluster that mediates the biosynthesis of campesine G, a dimeric indole piperazine alkaloid that shows good insecticidal activity Galleria mellonella. Within the pathway, cpsC catalyzes regioselective dehydrogenation reaction towards C2-N1 of the (2H)-indole ring of campesine D to yield the final product, campesine G. The non-canonical non-ribosomal peptide synthetase cpsA catalyzes the first steps of the pathway by producing L-tryptophanal and L-valinal from their respective amino-acids. These products condensate spontaneously to form trypyl-valyl pyrazine also known as didehydrocampesine A. The NmrA-like family domain-containing oxidoreductase cpsB is the next enzyme in cps pathway and reduces the unstable didehydrocampesine A to campesine A. The methyltransferase cpsF and the acetyltransferase cpsE both recognize N13 of piperazine ring to carry out methylation and acetylation of campesine A to produce campesine C and B, respectively. The cytochrome P450 monooxygenase cpsD then acts as a dimerase that catalyzes oxidative heterocoupling between campesine B and C to produce heterodimers with unexpected 6/5/6/6/6/6/5/6 eight-ring scaffold called campesine D. Finally,the cytochrome P450 monooxygenase cpsC is a regioselective dehydrogenase that catalyzes dehydrogenation reaction towards C2-N1 to produce campesine G. This is Cytochrome P450 monooxygenase cpsC from Aspergillus campestris (strain IBT 28561).